Here is a 588-residue protein sequence, read N- to C-terminus: Tannase (588 aa).

Residues 1 to 18 (MRQHSRMAVAALAAGANA) form the signal peptide. 3 disulfide bridges follow: C25/C71, C194/C502, and C261/C278. Residue S195 is the Acyl-ester intermediate of the active site. 4 residues coordinate Ca(2+): D262, D265, D269, and V271. At Q317 the chain carries Pyrrolidone carboxylic acid. Active-site charge relay system residues include D455 and H501.

The protein belongs to the tannase family. In terms of assembly, heterooctamer of 4 33 kDa and 4 30 kDa subunits linked by disulfide bond(s). The protein is glycosylated to a carbohydrate content of 22.7%. In terms of processing, the N-terminus of the 30 kDa subunit is blocked.

It catalyses the reaction digallate + H2O = 2 3,4,5-trihydroxybenzoate + H(+). In terms of biological role, hydrolyzes ester bonds of tannic acid to produce gallic acid and glucose. This Aspergillus oryzae (strain ATCC 42149 / RIB 40) (Yellow koji mold) protein is Tannase.